We begin with the raw amino-acid sequence, 228 residues long: Translin (228 aa).

A DNA/RNA binding region spans residues 86–90 (RFHEH). Residues 177 to 198 (LDSGFRLLNLKNDSLRKRYDGL) form a leucine-zipper region. Lysine 187 carries the N6-acetyllysine modification. Residue serine 190 is modified to Phosphoserine. Position 199 is an N6-acetyllysine (lysine 199).

The protein belongs to the translin family. As to quaternary structure, ring-shaped heterooctamer of six TSN and two TSNAX subunits, DNA/RNA binding occurs inside the ring.

The protein resides in the cytoplasm. It is found in the nucleus. Its function is as follows. DNA-binding protein that specifically recognizes consensus sequences at the breakpoint junctions in chromosomal translocations, mostly involving immunoglobulin (Ig)/T-cell receptor gene segments. Seems to recognize single-stranded DNA ends generated by staggered breaks occurring at recombination hot spots. In terms of biological role, exhibits both single-stranded and double-stranded endoribonuclease activity. May act as an activator of RNA-induced silencing complex (RISC) by facilitating endonucleolytic cleavage of the siRNA passenger strand. This chain is Translin (TSN), found in Bos taurus (Bovine).